The following is a 213-amino-acid chain: Orotate phosphoribosyltransferase (213 aa).

5-phospho-alpha-D-ribose 1-diphosphate is bound at residue lysine 26. Orotate is bound at residue 34–35 (FF). 5-phospho-alpha-D-ribose 1-diphosphate contacts are provided by residues 72-73 (YK), arginine 99, lysine 100, lysine 103, histidine 105, and 124-132 (DDVITAGTA). Positions 128 and 156 each coordinate orotate.

This sequence belongs to the purine/pyrimidine phosphoribosyltransferase family. PyrE subfamily. In terms of assembly, homodimer. Mg(2+) serves as cofactor.

The catalysed reaction is orotidine 5'-phosphate + diphosphate = orotate + 5-phospho-alpha-D-ribose 1-diphosphate. The protein operates within pyrimidine metabolism; UMP biosynthesis via de novo pathway; UMP from orotate: step 1/2. Its function is as follows. Catalyzes the transfer of a ribosyl phosphate group from 5-phosphoribose 1-diphosphate to orotate, leading to the formation of orotidine monophosphate (OMP). This chain is Orotate phosphoribosyltransferase, found in Escherichia coli O127:H6 (strain E2348/69 / EPEC).